Here is a 1104-residue protein sequence, read N- to C-terminus: Lon protease homolog, mitochondrial (1104 aa).

The N-terminal 58 residues, 1 to 58 (MLPLRAFARLAQRPRLSRPTQLARSSLPRPSPSRPAAHYLALAPAPSTRFLHSSPPVL), are a transit peptide targeting the mitochondrion. Disordered regions lie at residues 8–144 (ARLA…KEVA) and 275–295 (EGSQ…SEVP). A compositionally biased stretch (low complexity) spans 22 to 46 (LARSSLPRPSPSRPAAHYLALAPAP). The span at 80–103 (KQDDQVEKPLPDAESSKSAEERAK) shows a compositional bias: basic and acidic residues. The span at 104-128 (SQSSKPDIKASSSDSVSSSAPAPGS) shows a compositional bias: low complexity. Residues 129-139 (ADGGSPPGAGG) show a composition bias toward gly residues. One can recognise a Lon N-terminal domain in the interval 155–444 (VLAIPITHRP…RALVLLKKEL (290 aa)). The span at 281–291 (AKGEGEVKSFE) shows a compositional bias: basic and acidic residues. Residue 597–604 (GPPGVGKT) participates in ATP binding. In terms of domain architecture, Lon proteolytic spans 895–1082 (SPPAGVSTGL…RQVLHEAFRG (188 aa)). Active-site residues include Ser987 and Lys1030.

This sequence belongs to the peptidase S16 family. In terms of assembly, homohexamer or homoheptamer. Organized in a ring with a central cavity.

The protein localises to the mitochondrion matrix. The catalysed reaction is Hydrolysis of proteins in presence of ATP.. Functionally, ATP-dependent serine protease that mediates the selective degradation of misfolded, unassembled or oxidatively damaged polypeptides as well as certain short-lived regulatory proteins in the mitochondrial matrix. May also have a chaperone function in the assembly of inner membrane protein complexes. Participates in the regulation of mitochondrial gene expression and in the maintenance of the integrity of the mitochondrial genome. Binds to mitochondrial DNA in a site-specific manner. This Cryptococcus neoformans var. neoformans serotype D (strain JEC21 / ATCC MYA-565) (Filobasidiella neoformans) protein is Lon protease homolog, mitochondrial.